A 538-amino-acid polypeptide reads, in one-letter code: Inositol-3-phosphate synthase (538 aa).

Gly-74, Gly-75, Asn-76, Asn-77, Asp-150, Ser-186, Val-187, Gln-197, Asp-198, Arg-200, Thr-247, Ala-248, Asn-249, Thr-250, Gly-298, Ser-299, Asp-323, Ser-326, Asn-357, Asn-358, Asp-359, Lys-372, Gly-412, Asp-413, Asp-441, and Ser-442 together coordinate NAD(+).

This sequence belongs to the myo-inositol 1-phosphate synthase family. In terms of assembly, homotetramer. The cofactor is NAD(+).

It localises to the cytoplasm. The enzyme catalyses D-glucose 6-phosphate = 1D-myo-inositol 3-phosphate. Its pathway is polyol metabolism; myo-inositol biosynthesis; myo-inositol from D-glucose 6-phosphate: step 1/2. Functionally, key enzyme in myo-inositol biosynthesis pathway that catalyzes the conversion of glucose 6-phosphate to 1-myo-inositol 1-phosphate in a NAD-dependent manner. Rate-limiting enzyme in the synthesis of all inositol-containing compounds. This Candida glabrata (strain ATCC 2001 / BCRC 20586 / JCM 3761 / NBRC 0622 / NRRL Y-65 / CBS 138) (Yeast) protein is Inositol-3-phosphate synthase (INO1).